The following is a 232-amino-acid chain: tRNA (guanine-N(1)-)-methyltransferase (232 aa).

S-adenosyl-L-methionine is bound by residues Gly-112 and 132–137 (IGDYIL).

Belongs to the RNA methyltransferase TrmD family. As to quaternary structure, homodimer.

The protein localises to the cytoplasm. It catalyses the reaction guanosine(37) in tRNA + S-adenosyl-L-methionine = N(1)-methylguanosine(37) in tRNA + S-adenosyl-L-homocysteine + H(+). In terms of biological role, specifically methylates guanosine-37 in various tRNAs. The sequence is that of tRNA (guanine-N(1)-)-methyltransferase from Methylacidiphilum infernorum (isolate V4) (Methylokorus infernorum (strain V4)).